A 293-amino-acid polypeptide reads, in one-letter code: N(1)-aminopropylagmatine ureohydrolase (293 aa).

The Mn(2+) site is built by histidine 105, aspartate 128, histidine 130, aspartate 132, aspartate 210, and aspartate 212.

The protein belongs to the arginase family. It depends on Mn(2+) as a cofactor.

It catalyses the reaction N(1)-(3-aminopropyl)agmatine + H2O = urea + spermidine. Its pathway is amine and polyamine biosynthesis; spermidine biosynthesis. Functionally, involved in the biosynthesis of polyamines which are thought to support the growth of thermophilic microorganisms under high-temperature conditions. It seems that long-chain and branched-chain of polyamines effectively stabilize DNA and RNA, respectively. Catalyzes the decarboxylation of N1-(3-aminopropyl)agmatine to yield spermidine and urea. Does not act on agmatine. In Thermus thermophilus (strain ATCC BAA-163 / DSM 7039 / HB27), this protein is N(1)-aminopropylagmatine ureohydrolase.